The following is a 641-amino-acid chain: Fructose-1,6-bisphosphatase class 3 (641 aa).

Belongs to the FBPase class 3 family. Requires Mn(2+) as cofactor.

The enzyme catalyses beta-D-fructose 1,6-bisphosphate + H2O = beta-D-fructose 6-phosphate + phosphate. It participates in carbohydrate biosynthesis; gluconeogenesis. The polypeptide is Fructose-1,6-bisphosphatase class 3 (Bacillus velezensis (strain DSM 23117 / BGSC 10A6 / LMG 26770 / FZB42) (Bacillus amyloliquefaciens subsp. plantarum)).